The chain runs to 306 residues: Agmatinase (306 aa).

6 residues coordinate Mn(2+): His126, Asp149, His151, Asp153, Asp230, and Asp232.

Belongs to the arginase family. Agmatinase subfamily. The cofactor is Mn(2+).

The catalysed reaction is agmatine + H2O = urea + putrescine. It functions in the pathway amine and polyamine biosynthesis; putrescine biosynthesis via agmatine pathway; putrescine from agmatine: step 1/1. Catalyzes the formation of putrescine from agmatine. The protein is Agmatinase of Escherichia coli O7:K1 (strain IAI39 / ExPEC).